We begin with the raw amino-acid sequence, 92 residues long: Small ribosomal subunit protein uS19 (92 aa).

This sequence belongs to the universal ribosomal protein uS19 family.

Protein S19 forms a complex with S13 that binds strongly to the 16S ribosomal RNA. In Staphylococcus epidermidis (strain ATCC 35984 / DSM 28319 / BCRC 17069 / CCUG 31568 / BM 3577 / RP62A), this protein is Small ribosomal subunit protein uS19.